The sequence spans 493 residues: Glutamate--tRNA ligase (493 aa).

A 'HIGH' region motif is present at residues 10–20 (PSPTGDPHVGT). 4 residues coordinate Zn(2+): cysteine 107, cysteine 109, cysteine 134, and histidine 136. Residues 251–255 (KLSKR) carry the 'KMSKS' region motif. Lysine 254 contacts ATP.

It belongs to the class-I aminoacyl-tRNA synthetase family. Glutamate--tRNA ligase type 1 subfamily. Monomer. It depends on Zn(2+) as a cofactor.

It is found in the cytoplasm. The enzyme catalyses tRNA(Glu) + L-glutamate + ATP = L-glutamyl-tRNA(Glu) + AMP + diphosphate. In terms of biological role, catalyzes the attachment of glutamate to tRNA(Glu) in a two-step reaction: glutamate is first activated by ATP to form Glu-AMP and then transferred to the acceptor end of tRNA(Glu). The protein is Glutamate--tRNA ligase of Ectopseudomonas mendocina (strain ymp) (Pseudomonas mendocina).